Reading from the N-terminus, the 159-residue chain is Dihydrofolate reductase (159 aa).

The 156-residue stretch at 2–157 (TLSILVAHDL…IPHTFLHLIR (156 aa)) folds into the DHFR domain. 6–8 (LVA) contributes to the substrate binding site. NADP(+)-binding positions include 7-8 (VA) and 15-20 (IGFENQ). D28 is a substrate binding site. 44 to 47 (GRKT) is an NADP(+) binding site. R58 is a substrate binding site. Residues 63-66 (LTSD) and 93-98 (FGGQTL) contribute to the NADP(+) site. T112 is a binding site for substrate.

It belongs to the dihydrofolate reductase family.

The catalysed reaction is (6S)-5,6,7,8-tetrahydrofolate + NADP(+) = 7,8-dihydrofolate + NADPH + H(+). The protein operates within cofactor biosynthesis; tetrahydrofolate biosynthesis; 5,6,7,8-tetrahydrofolate from 7,8-dihydrofolate: step 1/1. In terms of biological role, key enzyme in folate metabolism. Catalyzes an essential reaction for de novo glycine and purine synthesis, and for DNA precursor synthesis. The sequence is that of Dihydrofolate reductase (folA) from Staphylococcus aureus (strain COL).